Here is a 469-residue protein sequence, read N- to C-terminus: Sulfate adenylyltransferase subunit 1 (469 aa).

Positions 22–237 (KEVLRFITCG…LEEVPVKSEE (216 aa)) constitute a tr-type G domain. Positions 31–38 (GSVDDGKS) are G1. 31–38 (GSVDDGKS) contacts GTP. The tract at residues 89–93 (GITID) is G2. The segment at 110–113 (DTPG) is G3. Residues 110 to 114 (DTPGH) and 165 to 168 (NKMD) contribute to the GTP site. Residues 165–168 (NKMD) form a G4 region. The segment at 202–204 (SAK) is G5.

It belongs to the TRAFAC class translation factor GTPase superfamily. Classic translation factor GTPase family. CysN/NodQ subfamily. In terms of assembly, heterodimer composed of CysD, the smaller subunit, and CysN.

The catalysed reaction is sulfate + ATP + H(+) = adenosine 5'-phosphosulfate + diphosphate. It functions in the pathway sulfur metabolism; hydrogen sulfide biosynthesis; sulfite from sulfate: step 1/3. With CysD forms the ATP sulfurylase (ATPS) that catalyzes the adenylation of sulfate producing adenosine 5'-phosphosulfate (APS) and diphosphate, the first enzymatic step in sulfur assimilation pathway. APS synthesis involves the formation of a high-energy phosphoric-sulfuric acid anhydride bond driven by GTP hydrolysis by CysN coupled to ATP hydrolysis by CysD. The sequence is that of Sulfate adenylyltransferase subunit 1 from Methylorubrum extorquens (strain PA1) (Methylobacterium extorquens).